Here is a 515-residue protein sequence, read N- to C-terminus: Nectin-1 (515 aa).

An N-terminal signal peptide occupies residues 1 to 30 (MARMGLAGAAGRWWGLALGLTAFFLPGTHT). Positions 31–141 (QVVQVNDSMY…GNRESQLNLT (111 aa)) constitute an Ig-like V-type domain. The Extracellular segment spans residues 31-354 (QVVQVNDSMY…GRRAGQMPTA (324 aa)). N-linked (GlcNAc...) asparagine glycosylation is found at Asn-36, Asn-72, Asn-139, Asn-202, Asn-286, Asn-297, and Asn-332. A disulfide bond links Cys-51 and Cys-124. Ig-like C2-type domains are found at residues 145–243 (KPTN…TLNV) and 247–334 (PEVT…VNIT). Cystine bridges form between Cys-172–Cys-226 and Cys-269–Cys-316. The tract at residues 282–299 (WTTLNGSLPKGVEAQNRT) is interaction with FGFR. A helical membrane pass occupies residues 355–375 (IIGGVAGSVLLVLIVVGGIIV). Topologically, residues 376–515 (ALRRRRHTFK…SFISKKEWYV (140 aa)) are cytoplasmic. The segment at 399–486 (YSKAGIPQHH…DGYGDRTLGY (88 aa)) is disordered. 3 positions are modified to phosphoserine: Ser-421, Ser-433, and Ser-434. Phosphotyrosine is present on Tyr-435. Positions 447 to 464 (GERKVGGPHPKYDEDAKR) are enriched in basic and acidic residues. The residue at position 509 (Ser-509) is a Phosphoserine.

Belongs to the nectin family. As to quaternary structure, cis- and trans-homodimer. Can form trans-heterodimers with NECTIN3 and with NECTIN4. Interaction between NECTIN1 and NECTIN3 on the pre- and postsynaptic sites, respectively, initiates the formation of puncta adherentia junctions between axons and dendrites. Interacts (via cytoplasmic domain) with AFDN (via PDZ domain); this interaction recruits NECTIN1 to cadherin-based adherens junctions and provides a connection with the actin cytoskeleton. Interacts with integrin alphaV/beta3. Interacts (via Ig-like C2-type domain 2) with FGFR1, FGFR2 and FGFR3. In terms of assembly, (Microbial infection) Interacts with herpes pseudorabies virus/PRV envelope glycoprotein D.

It localises to the cell membrane. The protein resides in the cell junction. Its subcellular location is the adherens junction. It is found in the presynaptic cell membrane. In terms of biological role, cell adhesion molecule that promotes cell-cell contacts and plays important roles in the development of the nervous system. Acts by forming homophilic or heterophilic trans-dimers. Heterophilic interactions have been detected between NECTIN1 and NECTIN3 and between NECTIN1 and NECTIN4. Involved in axon guidance by promoting contacts between the commissural axons and the floor plate cells. Involved in synaptogegesis. Has some neurite outgrowth-promoting activity. Promotes formation of checkerboard-like cellular pattern of hair cells and supporting cells in the auditory epithelium via heterophilic interaction with NECTIN3: NECTIN1 is present in the membrane of hair cells and associates with NECTIN3 on supporting cells, thereby mediating heterotypic adhesion between these two cell types. Required for enamel mineralization. Functionally, (Microbial infection) Acts as a receptor for pseudorabies virus/PRV. The protein is Nectin-1 of Mus musculus (Mouse).